The primary structure comprises 310 residues: tRNA-cytidine(32) 2-sulfurtransferase (310 aa).

A PP-loop motif motif is present at residues 45–50; that stretch reads SGGKDS. The [4Fe-4S] cluster site is built by C120, C123, and C211.

The protein belongs to the TtcA family. In terms of assembly, homodimer. It depends on Mg(2+) as a cofactor. [4Fe-4S] cluster is required as a cofactor.

It localises to the cytoplasm. The enzyme catalyses cytidine(32) in tRNA + S-sulfanyl-L-cysteinyl-[cysteine desulfurase] + AH2 + ATP = 2-thiocytidine(32) in tRNA + L-cysteinyl-[cysteine desulfurase] + A + AMP + diphosphate + H(+). The protein operates within tRNA modification. Its function is as follows. Catalyzes the ATP-dependent 2-thiolation of cytidine in position 32 of tRNA, to form 2-thiocytidine (s(2)C32). The sulfur atoms are provided by the cysteine/cysteine desulfurase (IscS) system. The protein is tRNA-cytidine(32) 2-sulfurtransferase of Shewanella oneidensis (strain ATCC 700550 / JCM 31522 / CIP 106686 / LMG 19005 / NCIMB 14063 / MR-1).